Reading from the N-terminus, the 158-residue chain is SsrA-binding protein (158 aa).

The protein belongs to the SmpB family.

It localises to the cytoplasm. Functionally, required for rescue of stalled ribosomes mediated by trans-translation. Binds to transfer-messenger RNA (tmRNA), required for stable association of tmRNA with ribosomes. tmRNA and SmpB together mimic tRNA shape, replacing the anticodon stem-loop with SmpB. tmRNA is encoded by the ssrA gene; the 2 termini fold to resemble tRNA(Ala) and it encodes a 'tag peptide', a short internal open reading frame. During trans-translation Ala-aminoacylated tmRNA acts like a tRNA, entering the A-site of stalled ribosomes, displacing the stalled mRNA. The ribosome then switches to translate the ORF on the tmRNA; the nascent peptide is terminated with the 'tag peptide' encoded by the tmRNA and targeted for degradation. The ribosome is freed to recommence translation, which seems to be the essential function of trans-translation. The polypeptide is SsrA-binding protein (Caldanaerobacter subterraneus subsp. tengcongensis (strain DSM 15242 / JCM 11007 / NBRC 100824 / MB4) (Thermoanaerobacter tengcongensis)).